A 139-amino-acid chain; its full sequence is Transcription initiation factor IIA small chain homolog (139 aa).

The tract at residues 113 to 139 is disordered; the sequence is LSAQGPSKRVNRAHAAAAGDDEDDDSD.

Belongs to the TFIIA subunit 2 family.

Its subcellular location is the nucleus. This chain is Transcription initiation factor IIA small chain homolog, found in Caenorhabditis elegans.